We begin with the raw amino-acid sequence, 187 residues long: Elongation factor P (187 aa).

It belongs to the elongation factor P family.

The protein resides in the cytoplasm. It functions in the pathway protein biosynthesis; polypeptide chain elongation. Involved in peptide bond synthesis. Stimulates efficient translation and peptide-bond synthesis on native or reconstituted 70S ribosomes in vitro. Probably functions indirectly by altering the affinity of the ribosome for aminoacyl-tRNA, thus increasing their reactivity as acceptors for peptidyl transferase. The polypeptide is Elongation factor P (Synechococcus sp. (strain CC9605)).